A 30-amino-acid chain; its full sequence is MSTFQALMLMLAIGSFIIALLTYIEKIDLP.

The helical transmembrane segment at 4-24 (FQALMLMLAIGSFIIALLTYI) threads the bilayer.

Its subcellular location is the cell membrane. Its function is as follows. Toxic component of a type I toxin-antitoxin (TA) system; overexpression in the absence of cognate antisense antitoxin SR5 RNA leads to cell lysis. Base pairing occurs between the 3' UTRs of bsrE mRNA and SR5 RNA which leads to bsrE mRNA degradation initiated by RNase III (rnc) and RNase J1 (rnjA). Genetic evidence suggests an unidentified RNA-binding protein may exist that promotes TA RNA interaction. This chain is Small toxic protein BsrE, found in Bacillus subtilis (strain 168).